A 209-amino-acid chain; its full sequence is Orotate phosphoribosyltransferase (209 aa).

5-phospho-alpha-D-ribose 1-diphosphate contacts are provided by residues Arg96, Lys100, His102, and 122-130 (EDLISTGGS). Residue Ser126 participates in orotate binding.

Belongs to the purine/pyrimidine phosphoribosyltransferase family. PyrE subfamily. Homodimer. It depends on Mg(2+) as a cofactor.

It catalyses the reaction orotidine 5'-phosphate + diphosphate = orotate + 5-phospho-alpha-D-ribose 1-diphosphate. The protein operates within pyrimidine metabolism; UMP biosynthesis via de novo pathway; UMP from orotate: step 1/2. In terms of biological role, catalyzes the transfer of a ribosyl phosphate group from 5-phosphoribose 1-diphosphate to orotate, leading to the formation of orotidine monophosphate (OMP). The sequence is that of Orotate phosphoribosyltransferase from Streptococcus thermophilus (strain ATCC BAA-491 / LMD-9).